A 250-amino-acid chain; its full sequence is Flavin-dependent thymidylate synthase (250 aa).

The ThyX domain occupies 7–233; it reads LSVELIACSS…PTVFGDFEIE (227 aa). Residues 92–95, 103–107, and Arg172 each bind dUMP; these read ELVR and QLSQR. Residues 95–97 and Gln103 each bind FAD; that span reads RHR. A ThyX motif motif is present at residues 95–105; that stretch reads RHRHFSFSQLS. FAD-binding positions include 188–190 and His194; that span reads NFR. Arg199 is a binding site for dUMP. Arg199 functions as the Involved in ionization of N3 of dUMP, leading to its activation in the catalytic mechanism.

It belongs to the thymidylate synthase ThyX family. Homotetramer. FAD serves as cofactor.

The catalysed reaction is dUMP + (6R)-5,10-methylene-5,6,7,8-tetrahydrofolate + NADPH + H(+) = dTMP + (6S)-5,6,7,8-tetrahydrofolate + NADP(+). The protein operates within pyrimidine metabolism; dTTP biosynthesis. Functionally, catalyzes the reductive methylation of 2'-deoxyuridine-5'-monophosphate (dUMP) to 2'-deoxythymidine-5'-monophosphate (dTMP) while utilizing 5,10-methylenetetrahydrofolate (mTHF) as the methyl donor, and NADPH and FADH(2) as the reductant. In Corynebacterium glutamicum (strain ATCC 13032 / DSM 20300 / JCM 1318 / BCRC 11384 / CCUG 27702 / LMG 3730 / NBRC 12168 / NCIMB 10025 / NRRL B-2784 / 534), this protein is Flavin-dependent thymidylate synthase.